We begin with the raw amino-acid sequence, 330 residues long: MRSFTNLNPCYVLLPFFLVLATNATHTNNFLPRPRTGYYGSACWNVESIVRSVVESNYLANPANAPGILRMHFHDCFVQGCDASVLLAGPNSERTAIPNLSLRGFNVIEEAKTQLEIACPRTVSCADILALAARDFVHLAGGPWWPVPLGRLDGRISLASNVILPGPTDSVAVQKLRFAEKNLNTQDLVVLAAGHTIGTAGCIVFRDRFFNYDNTGSPDPTIAPSFVPLIQAQCPLNGDPATRVVLDTGSGDQFDTSYLNNLKNGRGLLESDQVLWTNLETRPIVERLLGLRFPFLIFGLEFARSMTKMSQIEIKTGLDGEIRRVCSAVN.

An N-terminal signal peptide occupies residues 1-24; sequence MRSFTNLNPCYVLLPFFLVLATNA. 4 disulfides stabilise this stretch: C43/C119, C76/C81, C125/C326, and C202/C234. The active-site Proton acceptor is H74. The Ca(2+) site is built by D75, V78, G80, D82, and S84. P165 provides a ligand contact to substrate. H195 provides a ligand contact to heme b. T196 contributes to the Ca(2+) binding site. Positions 247, 250, and 255 each coordinate Ca(2+).

Belongs to the peroxidase family. Classical plant (class III) peroxidase subfamily. The cofactor is heme b. Ca(2+) is required as a cofactor.

Its subcellular location is the secreted. The enzyme catalyses 2 a phenolic donor + H2O2 = 2 a phenolic radical donor + 2 H2O. Its function is as follows. Removal of H(2)O(2), oxidation of toxic reductants, biosynthesis and degradation of lignin, suberization, auxin catabolism, response to environmental stresses such as wounding, pathogen attack and oxidative stress. These functions might be dependent on each isozyme/isoform in each plant tissue. The polypeptide is Peroxidase 70 (PER70) (Arabidopsis thaliana (Mouse-ear cress)).